An 827-amino-acid chain; its full sequence is MEIIRAKHMGFCFGVLEAINVCNSLVEEKGRKYILGMLVHNKQVVEDMERKGFKLVTEDELLNDMDELKEDDIVVIRAHGTSKSVHEKLKERKVKVFDATCIFVNKIRQEIEIANENGYSILFMGDKNHPEVKGVISFADDIQIFESFEEAKKLKIDLDKTYLLSTQTTLNKKKFEEIKKYFKENYKNVVIFDKICGATAVRQKAVEDLAVKVEVMIIVGDTKSSNTKKLYEISKKLNDNSYLVENEEQLDLSIFRGKEVVGITAGASTPEETIMNIEKKVRGIYKMSNVNENQNEFSLMLEEFLPNQEKRVEGVIESMDQNFSYLDVPGERTAVRVRTDELKDYKVGDTVEVLITGLSEEDDDQEYITASRRKIEVEKNWEKIEDSFKNKTILDAKVTKKIKGGYLVEAFLYPGFLPNSLSEISDSEEKVNGKKIQVIVKDIKMDPKDKKNRKITYSVKDIRLAEQEKEFAGLAVGQIVDCVVTEVLDFGLAVDINTLKGFIHISEVSWKRLDKLSDNYKVGDKIKAVVVSLDEAKRNVKLSIKKLEEDPWATVANEFKVDDEIEGIVTKVLPYGAFVEIKPGVEGLVHISDFSWTKKKVNVADYVKEREKIKVRITDLHPEDRKLKLGIKQLVANPWETAEKDFAIDTVIKGKVVEVKPFGIFVEIADGIDAFVHSSDYNWVGEEIPKFEIGNEVELKITELDLNNKKIKGSLKALRKSPWEHAMEEYKVGTTVEKKIKTVADFGLFIELIKGIDGFIPTQFASKEFIKNIRDKFSEGDVVKAQVVEVNKETQKIKLSIKKIEIEEEKREEREQIEKYSTSSSEE.

Residues 1-284 (MEIIRAKHMG…MNIEKKVRGI (284 aa)) are 4-hydroxy-3-methylbut-2-enyl diphosphate reductase. A [4Fe-4S] cluster-binding site is contributed by Cys12. (2E)-4-hydroxy-3-methylbut-2-enyl diphosphate-binding residues include His40 and His79. 2 residues coordinate dimethylallyl diphosphate: His40 and His79. Isopentenyl diphosphate-binding residues include His40 and His79. Cys101 is a [4Fe-4S] cluster binding site. Residue His129 participates in (2E)-4-hydroxy-3-methylbut-2-enyl diphosphate binding. His129 is a binding site for dimethylallyl diphosphate. His129 lines the isopentenyl diphosphate pocket. Glu131 serves as the catalytic Proton donor. Thr168 serves as a coordination point for (2E)-4-hydroxy-3-methylbut-2-enyl diphosphate. Cys196 is a [4Fe-4S] cluster binding site. The (2E)-4-hydroxy-3-methylbut-2-enyl diphosphate site is built by Ser224, Ser225, Asn226, and Ser268. Residues Ser224, Ser225, Asn226, and Ser268 each coordinate dimethylallyl diphosphate. 4 residues coordinate isopentenyl diphosphate: Ser224, Ser225, Asn226, and Ser268. S1 motif domains follow at residues 477-545 (GQIV…LSIK), 562-632 (DDEI…LGIK), 649-716 (DTVI…GSLK), and 733-802 (GTTV…LSIK).

This sequence in the N-terminal section; belongs to the IspH family. [4Fe-4S] cluster is required as a cofactor.

The enzyme catalyses isopentenyl diphosphate + 2 oxidized [2Fe-2S]-[ferredoxin] + H2O = (2E)-4-hydroxy-3-methylbut-2-enyl diphosphate + 2 reduced [2Fe-2S]-[ferredoxin] + 2 H(+). It catalyses the reaction dimethylallyl diphosphate + 2 oxidized [2Fe-2S]-[ferredoxin] + H2O = (2E)-4-hydroxy-3-methylbut-2-enyl diphosphate + 2 reduced [2Fe-2S]-[ferredoxin] + 2 H(+). Its pathway is isoprenoid biosynthesis; dimethylallyl diphosphate biosynthesis; dimethylallyl diphosphate from (2E)-4-hydroxy-3-methylbutenyl diphosphate: step 1/1. The protein operates within isoprenoid biosynthesis; isopentenyl diphosphate biosynthesis via DXP pathway; isopentenyl diphosphate from 1-deoxy-D-xylulose 5-phosphate: step 6/6. In terms of biological role, catalyzes the conversion of 1-hydroxy-2-methyl-2-(E)-butenyl 4-diphosphate (HMBPP) into a mixture of isopentenyl diphosphate (IPP) and dimethylallyl diphosphate (DMAPP). Acts in the terminal step of the DOXP/MEP pathway for isoprenoid precursor biosynthesis. In Fusobacterium nucleatum subsp. nucleatum (strain ATCC 25586 / DSM 15643 / BCRC 10681 / CIP 101130 / JCM 8532 / KCTC 2640 / LMG 13131 / VPI 4355), this protein is 4-hydroxy-3-methylbut-2-enyl diphosphate reductase.